The sequence spans 237 residues: Coat protein (237 aa).

Residues 1–28 (MSAPASTTQATGSTTSTTTKTAGATPAT) are disordered.

This sequence belongs to the potexvirus capsid protein family.

The protein resides in the virion. Required for genome encapsidation. Forms ribonucleoprotein complexes along with TGB1 helicase and viral RNA. This is Coat protein from Brassica campestris (Field mustard).